Consider the following 84-residue polypeptide: Anthracycline acyl carrier protein DpsG (84 aa).

Positions 3–80 constitute a Carrier domain; sequence ELSLAELREI…SMLIFVNERL (78 aa). Serine 40 bears the O-(pantetheine 4'-phosphoryl)serine mark.

The protein operates within antibiotic biosynthesis; daunorubicin biosynthesis. It participates in antibiotic biosynthesis; carminomycin biosynthesis. Its pathway is antibiotic biosynthesis; rhodomycin biosynthesis. It functions in the pathway antibiotic biosynthesis; aclacinomycin biosynthesis. Functionally, involved in the biosynthesis of aklanonate which is an important precursor common to the formation of the clinically significant anthracyclines such as carminomycin, daunorubicin (daunomycin), rhodomycin, aclacinomycin T (aklavin) and aclacinomycin A (aclarubicin). These compounds are aromatic polyketide antibiotics that exhibit high cytotoxicity and are widely applied in the chemotherapy of a variety of cancers. The polypeptide is Anthracycline acyl carrier protein DpsG (dpsG) (Streptomyces peucetius).